A 135-amino-acid polypeptide reads, in one-letter code: ATP synthase epsilon chain (135 aa).

The tract at residues 91 to 122 (EAQKQLSEAEQAWSKFDGQPNSPDKIKAQQAF) is disordered.

This sequence belongs to the ATPase epsilon chain family. In terms of assembly, F-type ATPases have 2 components, CF(1) - the catalytic core - and CF(0) - the membrane proton channel. CF(1) has five subunits: alpha(3), beta(3), gamma(1), delta(1), epsilon(1). CF(0) has three main subunits: a, b and c.

It is found in the cellular thylakoid membrane. Functionally, produces ATP from ADP in the presence of a proton gradient across the membrane. This Synechococcus sp. (strain RCC307) protein is ATP synthase epsilon chain.